A 200-amino-acid chain; its full sequence is dITP/XTP pyrophosphatase (200 aa).

7-12 (SNNRGK) contacts substrate. The active-site Proton acceptor is the Asp68. Asp68 is a Mg(2+) binding site. Residues Ala69, 154–157 (FGFD), Lys177, and 182–183 (HR) contribute to the substrate site.

It belongs to the HAM1 NTPase family. In terms of assembly, homodimer. Mg(2+) is required as a cofactor.

The enzyme catalyses XTP + H2O = XMP + diphosphate + H(+). It catalyses the reaction dITP + H2O = dIMP + diphosphate + H(+). It carries out the reaction ITP + H2O = IMP + diphosphate + H(+). Its function is as follows. Pyrophosphatase that catalyzes the hydrolysis of nucleoside triphosphates to their monophosphate derivatives, with a high preference for the non-canonical purine nucleotides XTP (xanthosine triphosphate), dITP (deoxyinosine triphosphate) and ITP. Seems to function as a house-cleaning enzyme that removes non-canonical purine nucleotides from the nucleotide pool, thus preventing their incorporation into DNA/RNA and avoiding chromosomal lesions. The chain is dITP/XTP pyrophosphatase from Delftia acidovorans (strain DSM 14801 / SPH-1).